A 134-amino-acid chain; its full sequence is Small ribosomal subunit protein uS8 (134 aa).

This sequence belongs to the universal ribosomal protein uS8 family. As to quaternary structure, part of the 30S ribosomal subunit. Contacts proteins S5 and S12.

Functionally, one of the primary rRNA binding proteins, it binds directly to 16S rRNA central domain where it helps coordinate assembly of the platform of the 30S subunit. The protein is Small ribosomal subunit protein uS8 of Thermosipho melanesiensis (strain DSM 12029 / CIP 104789 / BI429).